We begin with the raw amino-acid sequence, 417 residues long: Aminoacyltransferase FemB (417 aa).

This sequence belongs to the FemABX family.

The protein resides in the cytoplasm. It catalyses the reaction MurNAc-L-Ala-D-isoglutaminyl-L-Lys-(N(6)-tri-Gly)-D-Ala-D-Ala-diphospho-di-trans,octa-cis-undecaprenyl-GlcNAc + 2 glycyl-tRNA(Gly) = MurNAc-L-Ala-D-isoglutaminyl-L-Lys-(N(6)-penta-Gly)-D-Ala-D-Ala-diphospho-di-trans,octa-cis-undecaprenyl-GlcNAc + 2 tRNA(Gly) + 2 H(+). In terms of biological role, catalyzes the incorporation of amino acid(s) into the interchain peptide bridge of peptidoglycan, using aminoacyl-tRNA as amino acid donor. This Staphylococcus epidermidis (strain ATCC 35984 / DSM 28319 / BCRC 17069 / CCUG 31568 / BM 3577 / RP62A) protein is Aminoacyltransferase FemB (femB).